The primary structure comprises 139 residues: Acidic phospholipase A2 4 (139 aa).

A signal peptide spans 1–16 (MRTLWIVAVWLVGVEG). 7 disulfides stabilise this stretch: Cys42–Cys131, Cys44–Cys60, Cys59–Cys111, Cys65–Cys139, Cys66–Cys104, Cys73–Cys97, and Cys91–Cys102. The Ca(2+) site is built by Tyr43, Gly45, and Gly47. His63 is an active-site residue. Asp64 provides a ligand contact to Ca(2+). The active site involves Asp105.

It belongs to the phospholipase A2 family. Group II subfamily. D49 sub-subfamily. The cofactor is Ca(2+). As to expression, expressed by the venom gland.

The protein localises to the secreted. It carries out the reaction a 1,2-diacyl-sn-glycero-3-phosphocholine + H2O = a 1-acyl-sn-glycero-3-phosphocholine + a fatty acid + H(+). Functionally, PLA2 catalyzes the calcium-dependent hydrolysis of the 2-acyl groups in 3-sn-phosphoglycerides. This chain is Acidic phospholipase A2 4, found in Echis carinatus sochureki (Saw-scaled viper).